A 432-amino-acid polypeptide reads, in one-letter code: D-amino acid dehydrogenase (432 aa).

Residue 3 to 17 (VLVLGSGVIGTTTAY) coordinates FAD.

It belongs to the DadA oxidoreductase family. The cofactor is FAD.

The catalysed reaction is a D-alpha-amino acid + A + H2O = a 2-oxocarboxylate + AH2 + NH4(+). The protein operates within amino-acid degradation; D-alanine degradation; NH(3) and pyruvate from D-alanine: step 1/1. In terms of biological role, oxidative deamination of D-amino acids. This is D-amino acid dehydrogenase from Azotobacter vinelandii (strain DJ / ATCC BAA-1303).